Here is a 628-residue protein sequence, read N- to C-terminus: MNEREALRTFGTGENFHAQHYFGFHETEKNGVKGYIFRVWAPNAEDLHLIGDFTGWFDNPLQMDKNEAGVWEVFTDLPKEGHIYKYLVKRQGGQIVEKMDPFAIYLEERPGTGSLIRTIPEKKWKDGLWLGRRKRWGFFKRPVNIYEVHAGSWKQNEDGSPYSFEQLKDELVPYLVKMNYTHVEFMPLMAHPLGMSWGYQLMGFFAFEHTYGTPEQFQDFVEACHLNNIGVIVDWVPGHFTQNDDALAYFDGTPTFEYQDHDRAHNYRWGALNFDLGKNQVQSFLISSAKFWIDFYHIDGIRVDAVSNMLYLDYDEGPWQPNIEGNNRNLEGYYFLQRLNTVLKLAHPDVMMIAEESTATTKITGRREEGGLGFDYKWNMGWMNDILKFYEEDPIYRKYDFNLVTFSFMYLFSENFILPFSHDEVVHGKKSLMHKMWGDRYNQFAGLRNLYTYQICHPGKKLLFMGSEFGQFLEWKYDHALEWTNLEEEDGLNLKMQDFTSQLNQFYKDHKVLWQLDTSYDGLEIIDADNVDESVLSFIRKNEKGDLLVCVFNMVPVERKGFTIGVPVAGIYEEVWNTELEEFGGVWKEHNMTVKTQKNLWKEYENTLSFTLPALGASIWKIKRRLRK.

Asp-304 functions as the Nucleophile in the catalytic mechanism. Glu-355 acts as the Proton donor in catalysis.

The protein belongs to the glycosyl hydrolase 13 family. GlgB subfamily. As to quaternary structure, monomer.

The enzyme catalyses Transfers a segment of a (1-&gt;4)-alpha-D-glucan chain to a primary hydroxy group in a similar glucan chain.. It participates in glycan biosynthesis; glycogen biosynthesis. Catalyzes the formation of the alpha-1,6-glucosidic linkages in glycogen by scission of a 1,4-alpha-linked oligosaccharide from growing alpha-1,4-glucan chains and the subsequent attachment of the oligosaccharide to the alpha-1,6 position. The protein is 1,4-alpha-glucan branching enzyme GlgB of Streptococcus mutans serotype c (strain ATCC 700610 / UA159).